The chain runs to 525 residues: Peptide chain release factor 3 (525 aa).

The 268-residue stretch at 9-276 folds into the tr-type G domain; sequence AKRRTFAIIS…GFTRYAPAPQ (268 aa). Residues 18-25, 86-90, and 140-143 contribute to the GTP site; these read SHPDAGKT, DTPGH, and NKFD.

Belongs to the TRAFAC class translation factor GTPase superfamily. Classic translation factor GTPase family. PrfC subfamily.

The protein localises to the cytoplasm. Increases the formation of ribosomal termination complexes and stimulates activities of RF-1 and RF-2. It binds guanine nucleotides and has strong preference for UGA stop codons. It may interact directly with the ribosome. The stimulation of RF-1 and RF-2 is significantly reduced by GTP and GDP, but not by GMP. This Francisella tularensis subsp. mediasiatica (strain FSC147) protein is Peptide chain release factor 3.